A 313-amino-acid polypeptide reads, in one-letter code: Solute carrier family 35 member E3 (313 aa).

Helical transmembrane passes span 17–37 (GLLL…WIYV), 40–60 (GFPN…GLYV), 77–97 (LLLL…SLQN), 100–120 (IGTY…IQTL), 130–147 (IRLT…NSYY), 153–173 (FLGT…QVWV), 187–206 (LLYY…VPFF), 225–245 (LMVL…YWII), 252–272 (TYNM…YVLF), and 275–295 (PLSI…LAYT).

It belongs to the TPT transporter family. SLC35E subfamily.

The protein localises to the membrane. Putative transporter. This chain is Solute carrier family 35 member E3 (SLC35E3), found in Bos taurus (Bovine).